The sequence spans 273 residues: Shikimate dehydrogenase (NADP(+)) (273 aa).

Shikimate-binding positions include 14 to 16 (SKS) and threonine 61. Lysine 65 serves as the catalytic Proton acceptor. Residues asparagine 86 and aspartate 102 each contribute to the shikimate site. NADP(+) contacts are provided by residues 126–130 (GAGGA), 150–155 (NRTHAK), and methionine 213. Tyrosine 215 serves as a coordination point for shikimate. Glycine 237 contacts NADP(+).

This sequence belongs to the shikimate dehydrogenase family. As to quaternary structure, homodimer.

It carries out the reaction shikimate + NADP(+) = 3-dehydroshikimate + NADPH + H(+). It participates in metabolic intermediate biosynthesis; chorismate biosynthesis; chorismate from D-erythrose 4-phosphate and phosphoenolpyruvate: step 4/7. Involved in the biosynthesis of the chorismate, which leads to the biosynthesis of aromatic amino acids. Catalyzes the reversible NADPH linked reduction of 3-dehydroshikimate (DHSA) to yield shikimate (SA). This is Shikimate dehydrogenase (NADP(+)) from Aeromonas salmonicida (strain A449).